We begin with the raw amino-acid sequence, 469 residues long: MWKEKVQQYEDQIINDLKGLLAIESVRDDAKASEDAPVGPGPRKALDYMYEIAHRDGFTTHDVDHIAGRIEAGKGNDVLGILCHVDVVPAGDGWDSNPFEPVVTEDAIIARGTLDDKGPTIAAYYAIKILEDMNVDWKKRIHMIIGTDEESDWKCTDRYFKTEEMPTLGFAPDAEFPCIHGEKGITTFDLVQNKLAEDQDEPDYELITFKSGERYNMVPDHAEARVLVKENMTDVIQDFEYFLEQNHLQGDSTVDSGILVLTVEGKAVHGMDPSIGVNAGLYLLKFLASLNLDNNAQAFVAFSNRYLFDSDFGEKMGMKFHTDVMGDVTNNIGVITYDNENAGLFGINLRYPEGFEFEKAMDRFANEIQQYGFEVKLGKVQPPHYVDKNDPFVQKLVTAYRNQTNDMTEPYTIGGGTYARNLDKGVAFGAMFSDSEDLMHQKNEYITKKQLFNATSIYLEAIYSLCVEE.

His84 contributes to the Zn(2+) binding site. Residue Asp86 is part of the active site. Zn(2+) is bound at residue Asp115. Glu149 serves as the catalytic Proton acceptor. Residues Glu150, Asp173, and His440 each contribute to the Zn(2+) site.

Belongs to the peptidase M20A family. Zn(2+) serves as cofactor.

The polypeptide is Putative dipeptidase MW1694 (Staphylococcus aureus (strain MW2)).